An 876-amino-acid polypeptide reads, in one-letter code: Alanine--tRNA ligase (876 aa).

Residues histidine 565, histidine 569, cysteine 667, and histidine 671 each contribute to the Zn(2+) site.

The protein belongs to the class-II aminoacyl-tRNA synthetase family. Zn(2+) serves as cofactor.

It is found in the cytoplasm. The enzyme catalyses tRNA(Ala) + L-alanine + ATP = L-alanyl-tRNA(Ala) + AMP + diphosphate. Catalyzes the attachment of alanine to tRNA(Ala) in a two-step reaction: alanine is first activated by ATP to form Ala-AMP and then transferred to the acceptor end of tRNA(Ala). Also edits incorrectly charged Ser-tRNA(Ala) and Gly-tRNA(Ala) via its editing domain. The chain is Alanine--tRNA ligase from Staphylococcus aureus (strain bovine RF122 / ET3-1).